Reading from the N-terminus, the 93-residue chain is Small ribosomal subunit protein uS19 (93 aa).

The protein belongs to the universal ribosomal protein uS19 family.

In terms of biological role, protein S19 forms a complex with S13 that binds strongly to the 16S ribosomal RNA. The sequence is that of Small ribosomal subunit protein uS19 from Streptococcus gordonii (strain Challis / ATCC 35105 / BCRC 15272 / CH1 / DL1 / V288).